The following is a 282-amino-acid chain: Methyltransferase tpcH (282 aa).

The protein belongs to the class I-like SAM-binding methyltransferase superfamily. As to expression, specifically expressed in conidia.

It functions in the pathway secondary metabolite biosynthesis. Functionally, methyltransferase; part of the gene cluster that mediates the biosynthesis of trypacidin, a mycotoxin with antiprotozoal activity and that plays a role in the infection process. The pathway begins with the synthesis of atrochrysone thioester by the polyketide synthase (PKS) tpcC. The atrochrysone carboxyl ACP thioesterase tpcB then breaks the thioester bond and releases the atrochrysone carboxylic acid from tpcC. The decarboxylase tpcK converts atrochrysone carboxylic acid to atrochrysone which is further reduced into emodin anthrone. The next step is performed by the emodin anthrone oxygenase tpcL that catalyzes the oxidation of emodinanthrone to emodin. Emodin O-methyltransferase encoded by tpcA catalyzes methylation of the 8-hydroxy group of emodin to form questin. Ring cleavage of questin by questin oxidase tpcI leads to desmethylsulochrin via several intermediates including questin epoxide. Another methylation step catalyzed by tpcM leads to the formation of sulochrin which is further converted to monomethylsulfochrin by tpcH. Finally, the tpcJ catalyzes the conversion of monomethylsulfochrin to trypacidin. Trypacidin is toxic for human pulmonary and bronchial epithelial cells by initiating the intracellular formation of nitric oxide (NO) and hydrogen peroxide (H(2)O(2)), thus triggering host necrotic cell death. The trypacidin pathway is also able to produce endocrocin via a distinct route from the endocrocin Enc pathway. In Aspergillus fumigatus (strain ATCC MYA-4609 / CBS 101355 / FGSC A1100 / Af293) (Neosartorya fumigata), this protein is Methyltransferase tpcH.